Consider the following 269-residue polypeptide: Small ribosomal subunit protein eS1 (269 aa).

Disordered stretches follow at residues 1 to 20 (MAVG…SKKK) and 249 to 269 (AASG…QESV).

It belongs to the eukaryotic ribosomal protein eS1 family. Component of the small ribosomal subunit. Mature ribosomes consist of a small (40S) and a large (60S) subunit. The 40S subunit contains about 33 different proteins and 1 molecule of RNA (18S). The 60S subunit contains about 49 different proteins and 3 molecules of RNA (28S, 5.8S and 5S).

The protein localises to the cytoplasm. This chain is Small ribosomal subunit protein eS1, found in Anopheles darlingi (Mosquito).